We begin with the raw amino-acid sequence, 176 residues long: uncharacterized protein (176 aa).

This is an uncharacterized protein from Treponema pallidum (strain Nichols).